The primary structure comprises 695 residues: Interleukin-1 receptor accessory protein-like 1 (695 aa).

An N-terminal signal peptide occupies residues 1 to 24 (MKAPIPHLILLYATFTQSLKVVTK). The Ig-like C2-type 1 domain occupies 25-134 (RGSADGCTDW…YCMKVSISLT (110 aa)). The Extracellular segment spans residues 25-357 (RGSADGCTDW…LLHKRELMYT (333 aa)). Intrachain disulfides connect C31–C126 and C53–C118. N63, N122, and N138 each carry an N-linked (GlcNAc...) asparagine glycan. 2 disulfides stabilise this stretch: C143–C185 and C164–C216. Ig-like C2-type domains follow at residues 143–232 (CYNS…TELT) and 242–350 (PKLL…VLLH). N-linked (GlcNAc...) asparagine glycans are attached at residues N213, N264, and N331. A disulfide bridge connects residues C267 and C334. The helical transmembrane segment at 358–378 (VELAGGLGAILLLLICSVTIY) threads the bilayer. The Cytoplasmic segment spans residues 379–695 (KCYKIEIMLF…RETSISSVIW (317 aa)). The 156-residue stretch at 403 to 558 (KDYDAYLSYT…KFWKRLQYEM (156 aa)) folds into the TIR domain. E490 is a catalytic residue. Residues 548–643 (SKFWKRLQYE…TGTLPLTSIG (96 aa)) are interaction with NCS1. The tract at residues 657–679 (NGQRPQTKSNREPNPDEAHTNSA) is disordered. Residues 665-675 (SNREPNPDEAH) are compositionally biased toward basic and acidic residues.

The protein belongs to the interleukin-1 receptor family. Homodimer. Interacts (calcium-independent) with NCS1/FREQ. Interacts (via the first immunoglobilin domain) with PTPRD (via the second immunoglobilin domain); this interaction is PTPRD-splicing-dependent and induces pre- and post-synaptic differentiation of neurons and is required for IL1RAPL1-mediated synapse formation. Detected in total brain extracts, olfactory bulb, hippocampus and striatum (at protein level).

It localises to the cell membrane. It is found in the cytoplasm. Its subcellular location is the cell projection. The protein resides in the axon. The protein localises to the dendrite. It catalyses the reaction NAD(+) + H2O = ADP-D-ribose + nicotinamide + H(+). In terms of biological role, may regulate secretion and presynaptic differentiation through inhibition of the activity of N-type voltage-gated calcium channel. May activate the MAP kinase JNK. Plays a role in neurite outgrowth. During dendritic spine formation can bidirectionally induce pre- and post-synaptic differentiation of neurons by trans-synaptically binding to PTPRD. In Mus musculus (Mouse), this protein is Interleukin-1 receptor accessory protein-like 1 (Il1rapl1).